The sequence spans 541 residues: CTP synthase (541 aa).

Residues 1–265 form an amidoligase domain region; the sequence is MTRFIFITGG…DAVVCRHFGL (265 aa). Residue Ser13 participates in CTP binding. UTP is bound at residue Ser13. ATP is bound at residue 14 to 19; it reads SLGKGL. Residue Tyr54 coordinates L-glutamine. An ATP-binding site is contributed by Asp71. 2 residues coordinate Mg(2+): Asp71 and Glu139. CTP-binding positions include 146-148, 186-191, and Lys222; these read DIE and KTKPTQ. UTP contacts are provided by residues 186–191 and Lys222; that span reads KTKPTQ. Residues 290–540 form the Glutamine amidotransferase type-1 domain; it reads TIAIVGKYIS…IAAAVRQSRL (251 aa). Gly352 lines the L-glutamine pocket. Cys379 functions as the Nucleophile; for glutamine hydrolysis in the catalytic mechanism. L-glutamine contacts are provided by residues 380 to 383, Glu403, and Arg468; that span reads FGMQ. Active-site residues include His513 and Glu515.

This sequence belongs to the CTP synthase family. Homotetramer.

It catalyses the reaction UTP + L-glutamine + ATP + H2O = CTP + L-glutamate + ADP + phosphate + 2 H(+). The enzyme catalyses L-glutamine + H2O = L-glutamate + NH4(+). It carries out the reaction UTP + NH4(+) + ATP = CTP + ADP + phosphate + 2 H(+). It functions in the pathway pyrimidine metabolism; CTP biosynthesis via de novo pathway; CTP from UDP: step 2/2. With respect to regulation, allosterically activated by GTP, when glutamine is the substrate; GTP has no effect on the reaction when ammonia is the substrate. The allosteric effector GTP functions by stabilizing the protein conformation that binds the tetrahedral intermediate(s) formed during glutamine hydrolysis. Inhibited by the product CTP, via allosteric rather than competitive inhibition. Catalyzes the ATP-dependent amination of UTP to CTP with either L-glutamine or ammonia as the source of nitrogen. Regulates intracellular CTP levels through interactions with the four ribonucleotide triphosphates. The protein is CTP synthase of Paramagnetospirillum magneticum (strain ATCC 700264 / AMB-1) (Magnetospirillum magneticum).